The following is a 180-amino-acid chain: uncharacterized protein (180 aa).

The region spanning 31–180 (LLVRTAEWLR…HLFEKEITAE (150 aa)) is the N-acetyltransferase domain.

It belongs to the acetyltransferase family.

This is an uncharacterized protein from Bacillus subtilis (strain 168).